The chain runs to 473 residues: Zinc finger and SCAN domain-containing protein 21 (473 aa).

Residue Lys27 forms a Glycyl lysine isopeptide (Lys-Gly) (interchain with G-Cter in SUMO2) linkage. In terms of domain architecture, SCAN box spans 45 to 127; that stretch reads RQRFRQFGYH…TLLEDLEREL (83 aa). A disordered region spans residues 127–171; that stretch reads LDEPGHQVSTPPNEQKPVWEKISSSGTAKESPSSMQPQPLETSHN. Residues 148–171 are compositionally biased toward polar residues; that stretch reads ISSSGTAKESPSSMQPQPLETSHN. Residues Lys221 and Lys232 each participate in a glycyl lysine isopeptide (Lys-Gly) (interchain with G-Cter in SUMO2) cross-link. The disordered stretch occupies residues 244-272; that stretch reads LENEKGTKPPLQEAGSKKGRESVPTKPTP. Positions 258–272 are enriched in basic and acidic residues; sequence GSKKGRESVPTKPTP. 7 C2H2-type zinc fingers span residues 277–299, 305–327, 333–354, 360–382, 388–410, 416–438, and 444–466; these read YICA…RRTH, YVCT…YRTH, YDCK…QRMH, YQCK…YRIH, YQCN…QRLH, YKCK…HRIH, and YWCH…QRVH. Lys349 is covalently cross-linked (Glycyl lysine isopeptide (Lys-Gly) (interchain with G-Cter in SUMO2)).

The protein belongs to the krueppel C2H2-type zinc-finger protein family.

The protein localises to the nucleus. In terms of biological role, strong transcriptional activator. Plays an important role in spermatogenesis; essential for the progression of meiotic prophase I in spermatocytes. The protein is Zinc finger and SCAN domain-containing protein 21 (ZSCAN21) of Gorilla gorilla gorilla (Western lowland gorilla).